Here is a 773-residue protein sequence, read N- to C-terminus: Phenylalanine--tRNA ligase beta subunit (773 aa).

The tRNA-binding domain occupies 39-150; the sequence is LKAPDKVVVG…GKLELGRPLN (112 aa). Residues 391 to 467 enclose the B5 domain; that stretch reads KELPIIPISI…RIIGIDNIAS (77 aa). The Mg(2+) site is built by aspartate 445, aspartate 451, glutamate 454, and glutamate 455. Residues 682 to 773 form the FDX-ACB domain; sequence SKFPAITRDL…TLKNLGLDLR (92 aa).

It belongs to the phenylalanyl-tRNA synthetase beta subunit family. Type 1 subfamily. As to quaternary structure, tetramer of two alpha and two beta subunits. Requires Mg(2+) as cofactor.

It localises to the cytoplasm. The enzyme catalyses tRNA(Phe) + L-phenylalanine + ATP = L-phenylalanyl-tRNA(Phe) + AMP + diphosphate + H(+). The sequence is that of Phenylalanine--tRNA ligase beta subunit from Campylobacter jejuni (strain RM1221).